Here is a 137-residue protein sequence, read N- to C-terminus: MSRHRRPQGFNRTDRVADQIQRELSRLLQFEMKDPRVNLATIQDVTVSRDLSYAEVYFTLLGQGEEAGAEAEEVLTKASGFLRSSLAQGLNTRTTPKLRFHYDMTPERAAHLSQLIDEARAEDRELRPEDDETGNNE.

Positions 114-137 (QLIDEARAEDRELRPEDDETGNNE) are disordered. Over residues 117 to 127 (DEARAEDRELR) the composition is skewed to basic and acidic residues. Acidic residues predominate over residues 128–137 (PEDDETGNNE).

It belongs to the RbfA family. Monomer. Binds 30S ribosomal subunits, but not 50S ribosomal subunits or 70S ribosomes.

The protein localises to the cytoplasm. One of several proteins that assist in the late maturation steps of the functional core of the 30S ribosomal subunit. Associates with free 30S ribosomal subunits (but not with 30S subunits that are part of 70S ribosomes or polysomes). Required for efficient processing of 16S rRNA. May interact with the 5'-terminal helix region of 16S rRNA. The sequence is that of Ribosome-binding factor A from Alcanivorax borkumensis (strain ATCC 700651 / DSM 11573 / NCIMB 13689 / SK2).